We begin with the raw amino-acid sequence, 147 residues long: Ubiquitin-conjugating enzyme E2 D2 (147 aa).

Residues 1 to 147 (MALKRIHKEL…SREWTQKYAM (147 aa)) enclose the UBC core domain. C85 functions as the Glycyl thioester intermediate in the catalytic mechanism.

This sequence belongs to the ubiquitin-conjugating enzyme family. In terms of assembly, interacts with SCF (SKP1-CUL1-F-box protein) E3 ubiquitin ligase complex. Interacts with CNOT4 (via RING domain). Interacts with E3 ubiquitin-protein ligases CBLC, PJA1 and PJA2. Interacts with PDZRN3. Interacts with PPP1R11. Interacts with E3 ubiquitin-protein ligase PHF7; the interaction inhibits cleavage of PHF7 and promotes association of the complex with the nucleosome core particle.

The enzyme catalyses S-ubiquitinyl-[E1 ubiquitin-activating enzyme]-L-cysteine + [E2 ubiquitin-conjugating enzyme]-L-cysteine = [E1 ubiquitin-activating enzyme]-L-cysteine + S-ubiquitinyl-[E2 ubiquitin-conjugating enzyme]-L-cysteine.. It catalyses the reaction S-ubiquitinyl-[E1 ubiquitin-activating enzyme]-L-cysteine + [acceptor protein]-L-lysine = [E1 ubiquitin-activating enzyme]-L-cysteine + N(6)-monoubiquitinyl-[acceptor protein]-L-lysine.. It participates in protein modification; protein ubiquitination. Accepts ubiquitin from the E1 complex and catalyzes its covalent attachment to other proteins. In vitro catalyzes 'Lys-48'-linked polyubiquitination. Mediates the selective degradation of short-lived and abnormal proteins. Functions in the E6/E6-AP-induced ubiquitination of p53/TP53. Mediates ubiquitination of PEX5 and SQSTM1 and autoubiquitination of STUB1 and TRAF6. Involved in the signal-induced conjugation and subsequent degradation of NFKBIA, FBXW2-mediated GCM1 ubiquitination and degradation, MDM2-dependent degradation of p53/TP53 and the activation of MAVS in the mitochondria by RIGI in response to viral infection. Essential for viral activation of IRF3. The polypeptide is Ubiquitin-conjugating enzyme E2 D2 (UBE2D2) (Sus scrofa (Pig)).